Here is a 129-residue protein sequence, read N- to C-terminus: Follitropin subunit beta (129 aa).

An N-terminal signal peptide occupies residues 1-20; it reads MKTLQFFFLFCCWKAICCNS. Disulfide bonds link Cys21–Cys69, Cys35–Cys84, Cys38–Cys122, Cys46–Cys100, Cys50–Cys102, and Cys105–Cys112. 2 N-linked (GlcNAc...) asparagine glycosylation sites follow: Asn25 and Asn42.

This sequence belongs to the glycoprotein hormones subunit beta family. Heterodimer. The active follitropin is a heterodimer composed of an alpha chain/CGA shared with other hormones and a unique beta chain/FSHB shown here.

The protein localises to the secreted. In terms of biological role, together with the alpha chain CGA constitutes follitropin, the follicle-stimulating hormone, and provides its biological specificity to the hormone heterodimer. Binds FSHR, a G protein-coupled receptor, on target cells to activate downstream signaling pathways. Follitropin is involved in follicle development and spermatogenesis in reproductive organs. The protein is Follitropin subunit beta (FSHB) of Pan troglodytes (Chimpanzee).